Reading from the N-terminus, the 438-residue chain is EF-hand calcium-binding domain-containing protein 3 (438 aa).

EF-hand domains follow at residues 47–82 (SQMA…LGMN) and 83–118 (LTKH…KNLF). Ca(2+) contacts are provided by Asp-96, Asp-98, Asp-100, Lys-102, and Asp-107. Phosphotyrosine is present on Tyr-279. Residues 405–415 (SSHNSRSSSSS) show a composition bias toward low complexity. The interval 405 to 438 (SSHNSRSSSSSDTSECYTDSGRKRKRKGLKGFQQ) is disordered. Positions 426–438 (RKRKRKGLKGFQQ) are enriched in basic residues.

The polypeptide is EF-hand calcium-binding domain-containing protein 3 (EFCAB3) (Homo sapiens (Human)).